The following is a 226-amino-acid chain: MPRPRKRQAGAAGPDKKQLSGKRTKTENSESASVKLENSSLEKTTTFKTCGKNLSNYWLMKSEPESRLEKGIDMKFSIEDLQAQPKQTTCWDGVRNYQAWNFLRAMKLEDEAFFYHSNCKQPGIVGLMKIVKEAYPDHTQFEKNDPHYDPSSKEDNPKWSMVDVQFVRMMKRFISLDELKTYHQAHKATGGPLKSMTLFTRQRLSVQPLTQEEFDFILSLEEAEPS.

The interval 1-38 is disordered; the sequence is MPRPRKRQAGAAGPDKKQLSGKRTKTENSESASVKLEN. The Nuclear localization signal signature appears at 5–10; the sequence is RKRQAG. Residues 14–28 show a composition bias toward basic and acidic residues; the sequence is PDKKQLSGKRTKTEN. Residues 29 to 38 are compositionally biased toward polar residues; sequence SESASVKLEN.

Post-translationally, phosphorylated.

The protein localises to the nucleus. Its function is as follows. Specifically binds 5-hydroxymethylcytosine (5hmC), suggesting that it acts as a specific reader of 5hmC. The polypeptide is Thymocyte nuclear protein 1 (Thyn1) (Rattus norvegicus (Rat)).